We begin with the raw amino-acid sequence, 1343 residues long: DNA-directed RNA polymerase subunit beta (1343 aa).

It belongs to the RNA polymerase beta chain family. In terms of assembly, the RNAP catalytic core consists of 2 alpha, 1 beta, 1 beta' and 1 omega subunit. When a sigma factor is associated with the core the holoenzyme is formed, which can initiate transcription.

The enzyme catalyses RNA(n) + a ribonucleoside 5'-triphosphate = RNA(n+1) + diphosphate. Functionally, DNA-dependent RNA polymerase catalyzes the transcription of DNA into RNA using the four ribonucleoside triphosphates as substrates. This is DNA-directed RNA polymerase subunit beta from Shewanella sediminis (strain HAW-EB3).